The following is a 286-amino-acid chain: 4-hydroxybenzoate octaprenyltransferase (286 aa).

The next 9 helical transmembrane spans lie at 19 to 39, 42 to 62, 92 to 112, 115 to 135, 137 to 157, 161 to 181, 206 to 226, 233 to 253, and 264 to 284; these read AGWLLLLWPTLSALWVASHGF, WHLLTVFTLGTILMRSAGCCV, ALVLGAVLALLAFGLVLTTNA, IAWSFAALAVTLAYPFAKRYV, MPQAVLGVAFSFGIPMAFAAV, VPLLAWVLLLGNLCWVIAYDT, FDVAGVMLSYLVYLSVWALAL, AIYWMAIGLAGLQALWHGWLI, and AFRLNHWLGFTVFAGIALSYL.

The protein belongs to the UbiA prenyltransferase family. Requires Mg(2+) as cofactor.

The protein resides in the cell inner membrane. The enzyme catalyses all-trans-octaprenyl diphosphate + 4-hydroxybenzoate = 4-hydroxy-3-(all-trans-octaprenyl)benzoate + diphosphate. It functions in the pathway cofactor biosynthesis; ubiquinone biosynthesis. Functionally, catalyzes the prenylation of para-hydroxybenzoate (PHB) with an all-trans polyprenyl group. Mediates the second step in the final reaction sequence of ubiquinone-8 (UQ-8) biosynthesis, which is the condensation of the polyisoprenoid side chain with PHB, generating the first membrane-bound Q intermediate 3-octaprenyl-4-hydroxybenzoate. The sequence is that of 4-hydroxybenzoate octaprenyltransferase from Polaromonas sp. (strain JS666 / ATCC BAA-500).